The primary structure comprises 421 residues: Autophagy-related protein 17 (421 aa).

The protein belongs to the ATG17 family. In terms of assembly, forms a complex with ATG13, ATG29 and CIS1/ATG31. The ATG17-ATG29-ATG31 complex interacts with the ATG1-ATG13 complex. Forms a complex with SNX4 and ATG20. Interacts with ATG11.

The protein resides in the cytoplasm. It localises to the preautophagosomal structure membrane. Autophagy-specific protein that functions with ATG13, ATG29, and CIS1/ATG31 in response to autophagy-inducing signals as a scaffold to recruit other ATG proteins to organize pre-autophagosomal structure (PAS) formation. Modulates the timing and magnitude of the autophagy response, such as the size of the sequestering vesicles, through interacting with and regulating ATG1 kinase activity. Plays particularly a role in pexophagy and nucleophagy. With ATG13, is required for ATG1 activation by autophosphorylation. Recruits ATG9 to the pre-autophagosomal structure. The protein is Autophagy-related protein 17 of Kluyveromyces marxianus (strain DMKU3-1042 / BCC 29191 / NBRC 104275) (Yeast).